We begin with the raw amino-acid sequence, 503 residues long: Mitogen-activated protein kinase kinae mkk2 (503 aa).

Positions 1–130 (MSSSPVPLLR…ASGPASASSS (130 aa)) are disordered. Residues 53 to 66 (APQPQRPSTRPAPP) show a composition bias toward pro residues. Residues 100-115 (TGLNESTGHSRSSSFT) are compositionally biased toward polar residues. Positions 121–130 (ASGPASASSS) are enriched in low complexity. Positions 211–481 (IIELGSLGEG…PWRMLEHPWM (271 aa)) constitute a Protein kinase domain. Residues 217-225 (LGEGAGGAV) and K240 contribute to the ATP site. D338 acts as the Proton acceptor in catalysis.

This sequence belongs to the protein kinase superfamily. STE Ser/Thr protein kinase family. MAP kinase kinase subfamily.

The enzyme catalyses L-seryl-[protein] + ATP = O-phospho-L-seryl-[protein] + ADP + H(+). It carries out the reaction L-threonyl-[protein] + ATP = O-phospho-L-threonyl-[protein] + ADP + H(+). Its function is as follows. Mitogen-activated kinase kinase (MAPKK), part of the cell wall integrity (CWI) signaling pathway composed by three protein kinases bck1, mkk2 and mpkA and responsible for the maintaining of cell-wall integrity balance. The CWI pathway also regulates the oxidative stress response, as well as the production of some secondary metabolites including pyomelanin. This is Mitogen-activated protein kinase kinae mkk2 from Aspergillus fumigatus (strain CBS 144.89 / FGSC A1163 / CEA10) (Neosartorya fumigata).